The chain runs to 50 residues: U37-theraphotoxin-Cg1a (50 aa).

Positions 1–19 are cleaved as a signal peptide; the sequence is MRVLLIIAGLALLSVVCYT.

It belongs to the neurotoxin 10 (Hwtx-1) family. 67 (Jztx-67) subfamily. In terms of tissue distribution, expressed by the venom gland.

It localises to the secreted. This chain is U37-theraphotoxin-Cg1a, found in Chilobrachys guangxiensis (Chinese earth tiger tarantula).